A 590-amino-acid chain; its full sequence is V-type ATP synthase alpha chain (590 aa).

234–241 (GGFGAGKT) contributes to the ATP binding site.

It belongs to the ATPase alpha/beta chains family.

The enzyme catalyses ATP + H2O + 4 H(+)(in) = ADP + phosphate + 5 H(+)(out). Functionally, produces ATP from ADP in the presence of a proton gradient across the membrane. The V-type alpha chain is a catalytic subunit. This chain is V-type ATP synthase alpha chain, found in Halothermothrix orenii (strain H 168 / OCM 544 / DSM 9562).